Reading from the N-terminus, the 176-residue chain is Cathelicidin-2 (176 aa).

The first 29 residues, 1-29 (METQGASLSLGRWSLWLLLLGLVVPLASA), serve as a signal peptide directing secretion. Glutamine 30 is modified (pyrrolidone carboxylic acid). The propeptide occupies 30–130 (QALSYREAVL…DINCNELQSV (101 aa)). Disulfide bonds link cysteine 85-cysteine 96 and cysteine 107-cysteine 124. The disordered stretch occupies residues 135–176 (PIRRPPIRPPFNPPFRPPVRPPFRPPFRPPFRPPIGPFPGRR). Positions 141–176 (IRPPFNPPFRPPVRPPFRPPFRPPFRPPIGPFPGRR) are enriched in pro residues. Proline amide is present on proline 173. A propeptide spans 174–176 (GRR) (removed in mature form).

Belongs to the cathelicidin family. In terms of processing, elastase is responsible for its maturation.

It localises to the secreted. In terms of biological role, binds to the lipid A moiety of bacterial lipopolysaccharides (LPS), a glycolipid present in the outer membrane of all Gram-negative bacteria. Shows a potent antimicrobial activity against the Gram-negative bacteria E.coli, S.typhimurium and P.aeruginosa. Less active against the Gram-positive bacteria S.aureus, L.monocytogenes and B.subtilis. In Capra hircus (Goat), this protein is Cathelicidin-2 (CATHL2).